A 134-amino-acid polypeptide reads, in one-letter code: Nogalonic acid methyl ester cyclase (134 aa).

Gln-95 is a binding site for nogalaviketone. The active-site Proton donor/acceptor is the Asp-111.

This sequence belongs to the polyketide cyclase DnrD family. In terms of assembly, homotetramer. Dimer of dimers.

The enzyme catalyses nogalaviketone = methyl nogalonate. Its pathway is antibiotic biosynthesis. Functionally, involved in the biosynthesis of the aromatic polyketide antibiotic nogalamycin. Catalyzes the formation of nogalaviketone from nogalonic acid methyl ester (NAME), the last ring-closure step in the biosynthesis of nogalamycin. In Streptomyces nogalater, this protein is Nogalonic acid methyl ester cyclase.